We begin with the raw amino-acid sequence, 707 residues long: Prolyl endopeptidase-like (707 aa).

Active-site charge relay system residues include Ser-538, Asp-624, and His-670.

Belongs to the peptidase S9A family. As to quaternary structure, homodimer.

The protein localises to the cytoplasm. It is found in the cytosol. In terms of biological role, serine peptidase whose precise substrate specificity remains unclear. Does not cleave peptides after a arginine or lysine residue. Regulates trans-Golgi network morphology and sorting by regulating the membrane binding of the AP-1 complex. May play a role in the regulation of synaptic vesicle exocytosis. The sequence is that of Prolyl endopeptidase-like (prepl) from Xenopus laevis (African clawed frog).